A 172-amino-acid chain; its full sequence is Melanocortin-2 receptor accessory protein (172 aa).

Residues 38-58 form a helical membrane-spanning segment; sequence IVIAFWVSLAAFVVLLFLILL. Disordered regions lie at residues 105 to 136 and 151 to 172; these read QAQA…LGGF and GPLV…QLQS.

Belongs to the MRAP family. In terms of assembly, homodimer and heterodimer. Forms antiparallel homodimers and heterodimers with MRAP2. Interacts with MC1R, MC2R, MC3R, MC4R and MC5R. In terms of tissue distribution, expressed in adrenal cortex, testis, breast, thyroid, lymph node, ovary and fat. Expressed in adipose tissues.

It is found in the cell membrane. It localises to the endoplasmic reticulum membrane. Its function is as follows. Modulator of melanocortin receptors (MC1R, MC2R, MC3R, MC4R and MC5R). Acts by increasing ligand-sensitivity of melanocortin receptors and enhancing generation of cAMP by the receptors. Required both for MC2R trafficking to the cell surface of adrenal cells and for signaling in response to corticotropin (ACTH). May be involved in the intracellular trafficking pathways in adipocyte cells. The polypeptide is Melanocortin-2 receptor accessory protein (MRAP) (Homo sapiens (Human)).